We begin with the raw amino-acid sequence, 448 residues long: Endoglucanase (448 aa).

Positions 1–34 are cleaved as a signal peptide; it reads MFSKIKKINFFKKTFSFLIAVVMMLFTVLGTNTY. Substrate contacts are provided by residues histidine 70, 74-75, tyrosine 101, and histidine 137; that span reads WY. The active-site Proton donor is the glutamate 175. Tyrosine 237 lines the substrate pocket. The active-site Nucleophile is glutamate 263. Residues 269-270, tryptophan 297, and 302-304 each bind substrate; these read AS and KSE.

Belongs to the glycosyl hydrolase 5 (cellulase A) family.

It carries out the reaction Endohydrolysis of (1-&gt;4)-beta-D-glucosidic linkages in cellulose, lichenin and cereal beta-D-glucans.. The protein is Endoglucanase (eglA) of Clostridium saccharobutylicum.